The following is a 270-amino-acid chain: NAD kinase (270 aa).

Asp-49 functions as the Proton acceptor in the catalytic mechanism. NAD(+) contacts are provided by residues 49–50 (DG), Arg-54, 126–127 (NE), Arg-152, Asp-154, 165–170 (TAYNKS), Ala-189, and Gln-227.

Belongs to the NAD kinase family. The cofactor is a divalent metal cation.

The protein localises to the cytoplasm. It carries out the reaction NAD(+) + ATP = ADP + NADP(+) + H(+). Its function is as follows. Involved in the regulation of the intracellular balance of NAD and NADP, and is a key enzyme in the biosynthesis of NADP. Catalyzes specifically the phosphorylation on 2'-hydroxyl of the adenosine moiety of NAD to yield NADP. This Lactococcus lactis subsp. lactis (strain IL1403) (Streptococcus lactis) protein is NAD kinase.